The sequence spans 257 residues: Zinc import ATP-binding protein ZnuC (257 aa).

One can recognise an ABC transporter domain in the interval 5–220 (ITLKNVAVNF…PEFIAMFGHH (216 aa)). 37–44 (GPNGAGKS) lines the ATP pocket.

Belongs to the ABC transporter superfamily. Zinc importer (TC 3.A.1.15.5) family. The complex is composed of two ATP-binding proteins (ZnuC), two transmembrane proteins (ZnuB) and a solute-binding protein (ZnuA).

It localises to the cell inner membrane. It catalyses the reaction Zn(2+)(out) + ATP(in) + H2O(in) = Zn(2+)(in) + ADP(in) + phosphate(in) + H(+)(in). In terms of biological role, part of the ABC transporter complex ZnuABC involved in zinc import. Responsible for energy coupling to the transport system. The polypeptide is Zinc import ATP-binding protein ZnuC (Photorhabdus laumondii subsp. laumondii (strain DSM 15139 / CIP 105565 / TT01) (Photorhabdus luminescens subsp. laumondii)).